Reading from the N-terminus, the 78-residue chain is Large ribosomal subunit protein bL28 (78 aa).

The protein belongs to the bacterial ribosomal protein bL28 family.

The polypeptide is Large ribosomal subunit protein bL28 (Tropheryma whipplei (strain TW08/27) (Whipple's bacillus)).